A 725-amino-acid chain; its full sequence is N-alpha-acetyltransferase 35, NatC auxiliary subunit (725 aa).

S187 carries the phosphoserine modification. The segment at 548–573 (ERIMEEQQKGRSSKKTKKKKKVRPLS) is disordered. Positions 558-571 (RSSKKTKKKKKVRP) are enriched in basic residues.

It belongs to the MAK10 family. In terms of assembly, component of the N-terminal acetyltransferase C (NatC) complex, which is composed of NAA35, NAA38 and NAA30.

It localises to the cytoplasm. Auxillary component of the N-terminal acetyltransferase C (NatC) complex which catalyzes acetylation of N-terminal methionine residues. N-terminal acetylation protects proteins from ubiquitination and degradation by the N-end rule pathway. Involved in regulation of apoptosis and proliferation of smooth muscle cells. The sequence is that of N-alpha-acetyltransferase 35, NatC auxiliary subunit (NAA35) from Macaca fascicularis (Crab-eating macaque).